A 1515-amino-acid polypeptide reads, in one-letter code: Metal resistance protein YCF1 (1515 aa).

The Vacuolar segment spans residues 1 to 32 (MAGNLVSWACKLCRSPEGFGPISFYGDFTQCF). Residues 33-53 (IDGVILNLSAIFMITFGIRDL) form a helical membrane-spanning segment. The Cytoplasmic segment spans residues 54 to 73 (VNLCKKKHSGIKYRRNWIIV). The chain crosses the membrane as a helical span at residues 74-94 (SRMALVLLEIAFVSLASLNIS). At 95–99 (KEEAE) the chain is on the vacuolar side. Residues 100-120 (NFTIVSQYASTMLSLFVALAL) traverse the membrane as a helical segment. Residues 121–130 (HWIEYDRSVV) lie on the Cytoplasmic side of the membrane. A helical membrane pass occupies residues 131–151 (ANTVLLFYWLFETFGNFAKLI). At 152–169 (NILIRHTYEGIWYSGQTG) the chain is on the vacuolar side. Residues 170–190 (FILTLFQVITCASILLLEALP) traverse the membrane as a helical segment. The Cytoplasmic portion of the chain corresponds to 191–278 (KKPLMPHQHI…QKSNPSLSWA (88 aa)). Phosphoserine is present on Ser251. The chain crosses the membrane as a helical span at residues 279-299 (ICRTFGSKMLLAAFFKAIHDV). The ABC transmembrane type-1 1 domain maps to 287–590 (MLLAAFFKAI…IPMVLNSFIE (304 aa)). The Vacuolar portion of the chain corresponds to 300–345 (LAFTQPQLLRILIKFVTDYNSERQDDHSSLQGFENNHPQKLPIVRG). The chain crosses the membrane as a helical span at residues 346-366 (FLIAFAMFLVGFTQTSVLHQY). Residues 367–422 (FLNVFNTGMYIKSALTALIYQKSLVLSNEASGLSSTGDIVNLMSVDVQKLQDLTQW) are Cytoplasmic-facing. The chain crosses the membrane as a helical span at residues 423–443 (LNLIWSGPFQIIICLYSLYKL). Residues 444–446 (LGN) are Vacuolar-facing. A helical transmembrane segment spans residues 447–467 (SMWVGVIILVIMMPLNSFLMR). Residues 468 to 530 (IQKKLQKSQM…NLTKLGCYMA (63 aa)) lie on the Cytoplasmic side of the membrane. A helical transmembrane segment spans residues 531–551 (VTSFQFNIVPFLVSCCTFAVF). Residues 552-572 (VYTEDRALTTDLVFPALTLFN) are Vacuolar-facing. Residues 573–593 (LLSFPLMIIPMVLNSFIEASV) traverse the membrane as a helical segment. At 594-943 (SIGRLFTFFT…VKWNIYLEYA (350 aa)) the chain is on the cytoplasmic side. In terms of domain architecture, ABC transporter 1 spans 626-853 (INIGDDATFL…ADSPLWKLLN (228 aa)). 663–670 (GKVGSGKT) is an ATP binding site. Residues Ser873, Ser903, and Ser908 each carry the phosphoserine modification. Thr911 carries the post-translational modification Phosphothreonine. Position 914 is a phosphoserine (Ser914). Residues 944–964 (KACNPKSVCVFILFIVISMFL) form a helical membrane-spanning segment. An ABC transmembrane type-1 2 domain is found at 951 to 1235 (VCVFILFIVI…IVRMTVEVET (285 aa)). Residues 965–1001 (SVMGNVWLKHWSEVNSRYGSNPNAARYLAIYFALGIG) are Vacuolar-facing. A helical transmembrane segment spans residues 1002–1023 (SALATLIQTIVLWVFCTIHASK). Residues 1024–1066 (YLHNLMTNSVLRAPMTFFETTPIGRILNRFSNDIYKVDALLGR) are Cytoplasmic-facing. A helical membrane pass occupies residues 1067 to 1087 (TFSQFFVNAVKVTFTITVICA). Thr1088 is a topological domain (vacuolar). The chain crosses the membrane as a helical span at residues 1089–1109 (TWQFIFIIIPLSVFYIYYQQY). Topologically, residues 1110 to 1180 (YLRTSRELRR…NANRWLAYRL (71 aa)) are cytoplasmic. The chain crosses the membrane as a helical span at residues 1181–1201 (ELIGSIIILGAATLSVFRLKQ). At 1202–1205 (GTLT) the chain is on the vacuolar side. The helical transmembrane segment at 1206–1226 (AGMVGLSLSYALQITQTLNWI) threads the bilayer. The Cytoplasmic segment spans residues 1227 to 1515 (VRMTVEVETN…CMEAGLVNEN (289 aa)). In terms of domain architecture, ABC transporter 2 spans 1272-1507 (IKFNNYSTRY…NKSLFYSLCM (236 aa)). 1306–1313 (GRTGAGKS) serves as a coordination point for ATP.

Belongs to the ABC transporter superfamily. ABCC family. Conjugate transporter (TC 3.A.1.208) subfamily.

The protein localises to the vacuole membrane. It catalyses the reaction Cd(2+)(in) + ATP + H2O = Cd(2+)(out) + ADP + phosphate + H(+). The enzyme catalyses an S-substituted glutathione(in) + ATP + H2O = an S-substituted glutathione(out) + ADP + phosphate + H(+). Functionally, cooperates for the ATP-dependent vacuolar transport of bilirubin and glutathione conjugates. The protein is Metal resistance protein YCF1 (YCF1) of Saccharomyces cerevisiae (strain ATCC 204508 / S288c) (Baker's yeast).